The primary structure comprises 332 residues: Anthranilate phosphoribosyltransferase (332 aa).

5-phospho-alpha-D-ribose 1-diphosphate is bound by residues Gly79, 82 to 83, Ser87, 89 to 92, 107 to 115, and Ser119; these read GD, NIST, and KHGNRSVSS. Gly79 is a binding site for anthranilate. Ser91 contributes to the Mg(2+) binding site. Asn110 contributes to the anthranilate binding site. An anthranilate-binding site is contributed by Arg165. Asp223 and Glu224 together coordinate Mg(2+).

It belongs to the anthranilate phosphoribosyltransferase family. Homodimer. Mg(2+) serves as cofactor.

The catalysed reaction is N-(5-phospho-beta-D-ribosyl)anthranilate + diphosphate = 5-phospho-alpha-D-ribose 1-diphosphate + anthranilate. It functions in the pathway amino-acid biosynthesis; L-tryptophan biosynthesis; L-tryptophan from chorismate: step 2/5. Functionally, catalyzes the transfer of the phosphoribosyl group of 5-phosphorylribose-1-pyrophosphate (PRPP) to anthranilate to yield N-(5'-phosphoribosyl)-anthranilate (PRA). The chain is Anthranilate phosphoribosyltransferase from Photorhabdus laumondii subsp. laumondii (strain DSM 15139 / CIP 105565 / TT01) (Photorhabdus luminescens subsp. laumondii).